We begin with the raw amino-acid sequence, 543 residues long: CTP synthase (543 aa).

The amidoligase domain stretch occupies residues 1–267 (MKQTKYIFVT…LNPIAEILDL (267 aa)). Residue Ser-15 participates in CTP binding. A UTP-binding site is contributed by Ser-15. ATP contacts are provided by residues 16-21 (SLGKGI) and Asp-73. Mg(2+) is bound by residues Asp-73 and Glu-141. Residues 148–150 (DIE), 188–193 (KTKPTQ), and Lys-224 contribute to the CTP site. Residues 188-193 (KTKPTQ) and Lys-224 contribute to the UTP site. The 252-residue stretch at 292-543 (KIAFVGKYVD…IKAAINYEDN (252 aa)) folds into the Glutamine amidotransferase type-1 domain. Gly-354 serves as a coordination point for L-glutamine. Catalysis depends on Cys-381, which acts as the Nucleophile; for glutamine hydrolysis. L-glutamine-binding positions include 382 to 385 (LGMQ), Glu-405, and Arg-473. Residues His-516 and Glu-518 contribute to the active site.

This sequence belongs to the CTP synthase family. As to quaternary structure, homotetramer.

The catalysed reaction is UTP + L-glutamine + ATP + H2O = CTP + L-glutamate + ADP + phosphate + 2 H(+). The enzyme catalyses L-glutamine + H2O = L-glutamate + NH4(+). It carries out the reaction UTP + NH4(+) + ATP = CTP + ADP + phosphate + 2 H(+). Its pathway is pyrimidine metabolism; CTP biosynthesis via de novo pathway; CTP from UDP: step 2/2. Its activity is regulated as follows. Allosterically activated by GTP, when glutamine is the substrate; GTP has no effect on the reaction when ammonia is the substrate. The allosteric effector GTP functions by stabilizing the protein conformation that binds the tetrahedral intermediate(s) formed during glutamine hydrolysis. Inhibited by the product CTP, via allosteric rather than competitive inhibition. Functionally, catalyzes the ATP-dependent amination of UTP to CTP with either L-glutamine or ammonia as the source of nitrogen. Regulates intracellular CTP levels through interactions with the four ribonucleotide triphosphates. The protein is CTP synthase of Campylobacter jejuni subsp. doylei (strain ATCC BAA-1458 / RM4099 / 269.97).